The chain runs to 37 residues: Large ribosomal subunit protein bL36c (37 aa).

This sequence belongs to the bacterial ribosomal protein bL36 family.

It is found in the plastid. It localises to the chloroplast. The sequence is that of Large ribosomal subunit protein bL36c from Welwitschia mirabilis (Tree tumbo).